Consider the following 451-residue polypeptide: Tubulin alpha-2 chain (451 aa).

Gln-11 provides a ligand contact to GTP. Lys-40 carries the post-translational modification N6-acetyllysine. Glu-71, Gly-144, Thr-145, Thr-179, Asn-206, and Asn-228 together coordinate GTP. Position 71 (Glu-71) interacts with Mg(2+). Glu-254 is an active-site residue.

The protein belongs to the tubulin family. As to quaternary structure, dimer of alpha and beta chains. A typical microtubule is a hollow water-filled tube with an outer diameter of 25 nm and an inner diameter of 15 nM. Alpha-beta heterodimers associate head-to-tail to form protofilaments running lengthwise along the microtubule wall with the beta-tubulin subunit facing the microtubule plus end conferring a structural polarity. Microtubules usually have 13 protofilaments but different protofilament numbers can be found in some organisms and specialized cells. Requires Mg(2+) as cofactor. Post-translationally, undergoes a tyrosination/detyrosination cycle, the cyclic removal and re-addition of a C-terminal tyrosine residue by the enzymes tubulin tyrosine carboxypeptidase (TTCP) and tubulin tyrosine ligase (TTL), respectively. Acetylation of alpha chains at Lys-40 stabilizes microtubules and affects affinity and processivity of microtubule motors. This modification has a role in multiple cellular functions, ranging from cell motility, cell cycle progression or cell differentiation to intracellular trafficking and signaling.

It is found in the cytoplasm. Its subcellular location is the cytoskeleton. It carries out the reaction GTP + H2O = GDP + phosphate + H(+). In terms of biological role, tubulin is the major constituent of microtubules, a cylinder consisting of laterally associated linear protofilaments composed of alpha- and beta-tubulin heterodimers. Microtubules grow by the addition of GTP-tubulin dimers to the microtubule end, where a stabilizing cap forms. Below the cap, tubulin dimers are in GDP-bound state, owing to GTPase activity of alpha-tubulin. In Oryza sativa subsp. japonica (Rice), this protein is Tubulin alpha-2 chain (TUBA).